The chain runs to 672 residues: UvrABC system protein B (672 aa).

The region spanning 26 to 181 (AGLEDGLAYQ…ILQRLAELQY (156 aa)) is the Helicase ATP-binding domain. ATP is bound at residue 39–46 (GVTGSGKT). The short motif at 92–115 (YYDYYQPEAYVPSSDTYIEKDASI) is the Beta-hairpin element. The Helicase C-terminal domain maps to 430–592 (QVDDLLSEIK…ITPKSIQKAV (163 aa)). The UVR domain maps to 631–666 (AKELRKLEEQMYHHARNLEFEEAAAVRDKIQHIRKG).

This sequence belongs to the UvrB family. In terms of assembly, forms a heterotetramer with UvrA during the search for lesions. Interacts with UvrC in an incision complex.

Its subcellular location is the cytoplasm. In terms of biological role, the UvrABC repair system catalyzes the recognition and processing of DNA lesions. A damage recognition complex composed of 2 UvrA and 2 UvrB subunits scans DNA for abnormalities. Upon binding of the UvrA(2)B(2) complex to a putative damaged site, the DNA wraps around one UvrB monomer. DNA wrap is dependent on ATP binding by UvrB and probably causes local melting of the DNA helix, facilitating insertion of UvrB beta-hairpin between the DNA strands. Then UvrB probes one DNA strand for the presence of a lesion. If a lesion is found the UvrA subunits dissociate and the UvrB-DNA preincision complex is formed. This complex is subsequently bound by UvrC and the second UvrB is released. If no lesion is found, the DNA wraps around the other UvrB subunit that will check the other stand for damage. This Coxiella burnetii (strain CbuG_Q212) (Coxiella burnetii (strain Q212)) protein is UvrABC system protein B.